The following is a 570-amino-acid chain: Sulfite reductase [NADPH] hemoprotein beta-component (570 aa).

[4Fe-4S] cluster-binding residues include Cys434, Cys440, Cys479, and Cys483. Cys483 contributes to the siroheme binding site.

Belongs to the nitrite and sulfite reductase 4Fe-4S domain family. Alpha(8)-beta(8). The alpha component is a flavoprotein, the beta component is a hemoprotein. Siroheme serves as cofactor. The cofactor is [4Fe-4S] cluster.

It carries out the reaction hydrogen sulfide + 3 NADP(+) + 3 H2O = sulfite + 3 NADPH + 4 H(+). Its pathway is sulfur metabolism; hydrogen sulfide biosynthesis; hydrogen sulfide from sulfite (NADPH route): step 1/1. Functionally, component of the sulfite reductase complex that catalyzes the 6-electron reduction of sulfite to sulfide. This is one of several activities required for the biosynthesis of L-cysteine from sulfate. This is Sulfite reductase [NADPH] hemoprotein beta-component from Escherichia fergusonii (strain ATCC 35469 / DSM 13698 / CCUG 18766 / IAM 14443 / JCM 21226 / LMG 7866 / NBRC 102419 / NCTC 12128 / CDC 0568-73).